Here is a 152-residue protein sequence, read N- to C-terminus: MSVLSILNYPNKKLRKIASNISLIDSEIKSLIKNMLETMYFNEGIGLAATQVDVHKRIIVIDISKNKNKPLILINPVFINKCGAQTFEEGCLSIPKKTAFVNRSKKVKIKAINCLGEEFLLKSKGLLATCIQHEMDHLIGKLFIDYIKPLKN.

2 residues coordinate Fe cation: C91 and H133. The active site involves E134. H137 provides a ligand contact to Fe cation.

Belongs to the polypeptide deformylase family. Fe(2+) serves as cofactor.

The enzyme catalyses N-terminal N-formyl-L-methionyl-[peptide] + H2O = N-terminal L-methionyl-[peptide] + formate. Removes the formyl group from the N-terminal Met of newly synthesized proteins. Requires at least a dipeptide for an efficient rate of reaction. N-terminal L-methionine is a prerequisite for activity but the enzyme has broad specificity at other positions. This is Peptide deformylase from Wigglesworthia glossinidia brevipalpis.